We begin with the raw amino-acid sequence, 149 residues long: Deoxyuridine 5'-triphosphate nucleotidohydrolase (149 aa).

Substrate is bound by residues 70 to 72, N83, and 87 to 89; these read RSG and LID.

This sequence belongs to the dUTPase family. Requires Mg(2+) as cofactor.

The enzyme catalyses dUTP + H2O = dUMP + diphosphate + H(+). The protein operates within pyrimidine metabolism; dUMP biosynthesis; dUMP from dCTP (dUTP route): step 2/2. Functionally, this enzyme is involved in nucleotide metabolism: it produces dUMP, the immediate precursor of thymidine nucleotides and it decreases the intracellular concentration of dUTP so that uracil cannot be incorporated into DNA. In Blochmanniella pennsylvanica (strain BPEN), this protein is Deoxyuridine 5'-triphosphate nucleotidohydrolase.